Consider the following 168-residue polypeptide: Gremlin-2 (168 aa).

The first 21 residues, 1 to 21 (MFWKLSLSLFLVAVLVKVAEA), serve as a signal peptide directing secretion. N-linked (GlcNAc...) asparagine glycosylation occurs at N40. Intrachain disulfides connect C73–C123, C87–C137, C97–C155, and C101–C157. One can recognise a CTCK domain in the interval 73 to 163 (CKTQPLRQTV…QCRCMSVNLS (91 aa)). N161 carries an N-linked (GlcNAc...) asparagine glycan.

It belongs to the DAN family. In terms of assembly, homodimer. Interacts with BMP2, BMP4 and BMP7, but has lower affinity for BMP7 than for BMP2 and BMP4. Binds heparin; this impairs the interaction with BMP2. N-glycosylated.

The protein resides in the secreted. Cytokine that inhibits the activity of BMP2 and BMP4 in a dose-dependent manner, and thereby modulates signaling by BMP family members. Contributes to the regulation of embryonic morphogenesis via BMP family members. Antagonizes BMP4-induced suppression of progesterone production in granulosa cells. The protein is Gremlin-2 (GREM2) of Homo sapiens (Human).